A 378-amino-acid chain; its full sequence is Coiled-coil domain-containing protein 74A (378 aa).

Disordered stretches follow at residues 1 to 52 (MSGA…RNLD), 128 to 211 (GGPS…EEPL), and 301 to 328 (EGSQ…PKVS). Over residues 34-44 (LRPQSPQLRQS) the composition is skewed to polar residues. A coiled-coil region spans residues 47 to 90 (QKRNLDLEKSLQFLQQQHSEMLAKLHEEIEHLKRENKDLHYKLI). Over residues 141–151 (RTHRPGGKRGR) the composition is skewed to basic residues. The segment covering 165–182 (DSLSMSSFQSVKSISNSG) has biased composition (polar residues). Basic and acidic residues-rich tracts occupy residues 194 to 205 (QDSKADVSQKAD) and 314 to 323 (SFPRDQEATH).

The sequence is that of Coiled-coil domain-containing protein 74A (CCDC74A) from Homo sapiens (Human).